The sequence spans 261 residues: Succinate dehydrogenase iron-sulfur subunit (261 aa).

The 92-residue stretch at 28 to 119 (RKVKVYRYDP…DIKIYPLPHM (92 aa)) folds into the 2Fe-2S ferredoxin-type domain. Positions 80, 85, and 100 each coordinate [2Fe-2S] cluster. In terms of domain architecture, 4Fe-4S ferredoxin-type spans 161 to 191 (DREKLDGLYECILCACCSTSCPSYWWNGDKY). [4Fe-4S] cluster-binding residues include cysteine 171, cysteine 174, and cysteine 177. Residue cysteine 181 participates in [3Fe-4S] cluster binding. Position 186 (tryptophan 186) interacts with a ubiquinone. Residues cysteine 228 and cysteine 234 each contribute to the [3Fe-4S] cluster site. Cysteine 238 is a [4Fe-4S] cluster binding site.

It belongs to the succinate dehydrogenase/fumarate reductase iron-sulfur protein family. In terms of assembly, part of an enzyme complex containing four subunits: a flavoprotein, an iron-sulfur, cytochrome b-556, and a hydrophobic anchor protein. [2Fe-2S] cluster is required as a cofactor. The cofactor is [3Fe-4S] cluster. Requires [4Fe-4S] cluster as cofactor.

The enzyme catalyses a quinone + succinate = fumarate + a quinol. Its pathway is carbohydrate metabolism; tricarboxylic acid cycle; fumarate from succinate (bacterial route): step 1/1. The polypeptide is Succinate dehydrogenase iron-sulfur subunit (sdhB) (Rickettsia prowazekii (strain Madrid E)).